The chain runs to 361 residues: Phospho-N-acetylmuramoyl-pentapeptide-transferase (361 aa).

The next 10 helical transmembrane spans lie at 27–47 (GALF…ISLL), 72–92 (TPTM…LLWA), 99–119 (VWIT…DDYL), 139–159 (ALIA…GLAY), 169–189 (AIVN…VGAG), 200–220 (GLAI…AYLV), 240–260 (LAVV…FNAP), 264–284 (IFMG…VAVA), 289–309 (IVLA…IIQV), and 338–358 (QVVI…LATL).

It belongs to the glycosyltransferase 4 family. MraY subfamily. Mg(2+) serves as cofactor.

It is found in the cell inner membrane. The enzyme catalyses UDP-N-acetyl-alpha-D-muramoyl-L-alanyl-gamma-D-glutamyl-meso-2,6-diaminopimeloyl-D-alanyl-D-alanine + di-trans,octa-cis-undecaprenyl phosphate = di-trans,octa-cis-undecaprenyl diphospho-N-acetyl-alpha-D-muramoyl-L-alanyl-D-glutamyl-meso-2,6-diaminopimeloyl-D-alanyl-D-alanine + UMP. It functions in the pathway cell wall biogenesis; peptidoglycan biosynthesis. Catalyzes the initial step of the lipid cycle reactions in the biosynthesis of the cell wall peptidoglycan: transfers peptidoglycan precursor phospho-MurNAc-pentapeptide from UDP-MurNAc-pentapeptide onto the lipid carrier undecaprenyl phosphate, yielding undecaprenyl-pyrophosphoryl-MurNAc-pentapeptide, known as lipid I. The polypeptide is Phospho-N-acetylmuramoyl-pentapeptide-transferase (Methylobacterium nodulans (strain LMG 21967 / CNCM I-2342 / ORS 2060)).